The sequence spans 229 residues: Ribonuclease 3 (229 aa).

The RNase III domain occupies leucine 5–aspartate 127. Residue glutamate 40 participates in Mg(2+) binding. Aspartate 44 is a catalytic residue. Positions 113 and 116 each coordinate Mg(2+). Glutamate 116 is an active-site residue. In terms of domain architecture, DRBM spans aspartate 154–valine 224.

It belongs to the ribonuclease III family. In terms of assembly, homodimer. The cofactor is Mg(2+).

Its subcellular location is the cytoplasm. The catalysed reaction is Endonucleolytic cleavage to 5'-phosphomonoester.. Functionally, digests double-stranded RNA. Involved in the processing of primary rRNA transcript to yield the immediate precursors to the large and small rRNAs (23S and 16S). Processes some mRNAs, and tRNAs when they are encoded in the rRNA operon. Processes pre-crRNA and tracrRNA of type II CRISPR loci if present in the organism. This Pseudomonas putida (strain W619) protein is Ribonuclease 3.